The sequence spans 300 residues: Ribosomal protein L11 methyltransferase (300 aa).

Residues threonine 144, glycine 165, aspartate 187, and asparagine 235 each coordinate S-adenosyl-L-methionine.

The protein belongs to the methyltransferase superfamily. PrmA family.

It localises to the cytoplasm. It carries out the reaction L-lysyl-[protein] + 3 S-adenosyl-L-methionine = N(6),N(6),N(6)-trimethyl-L-lysyl-[protein] + 3 S-adenosyl-L-homocysteine + 3 H(+). Functionally, methylates ribosomal protein L11. This is Ribosomal protein L11 methyltransferase from Prochlorococcus marinus (strain MIT 9515).